The chain runs to 207 residues: Small ribosomal subunit protein uS4 (207 aa).

Residues 32 to 55 (CKLDSKPGQHGRTSGARTSDYGTQ) are disordered. The span at 42–53 (GRTSGARTSDYG) shows a compositional bias: polar residues. The S4 RNA-binding domain maps to 97-158 (SRLDNVVYRM…TKKKQARILE (62 aa)).

This sequence belongs to the universal ribosomal protein uS4 family. In terms of assembly, part of the 30S ribosomal subunit. Contacts protein S5. The interaction surface between S4 and S5 is involved in control of translational fidelity.

One of the primary rRNA binding proteins, it binds directly to 16S rRNA where it nucleates assembly of the body of the 30S subunit. Its function is as follows. With S5 and S12 plays an important role in translational accuracy. This is Small ribosomal subunit protein uS4 from Paraburkholderia phytofirmans (strain DSM 17436 / LMG 22146 / PsJN) (Burkholderia phytofirmans).